The primary structure comprises 183 residues: ATP-dependent protease subunit HslV (183 aa).

Residue Thr-7 is part of the active site. Na(+) contacts are provided by Gly-162, Cys-165, and Thr-168.

This sequence belongs to the peptidase T1B family. HslV subfamily. In terms of assembly, a double ring-shaped homohexamer of HslV is capped on each side by a ring-shaped HslU homohexamer. The assembly of the HslU/HslV complex is dependent on binding of ATP.

It is found in the cytoplasm. The catalysed reaction is ATP-dependent cleavage of peptide bonds with broad specificity.. Its activity is regulated as follows. Allosterically activated by HslU binding. Protease subunit of a proteasome-like degradation complex believed to be a general protein degrading machinery. The protein is ATP-dependent protease subunit HslV of Alkalilimnicola ehrlichii (strain ATCC BAA-1101 / DSM 17681 / MLHE-1).